The following is a 331-amino-acid chain: Adenosine deaminase (331 aa).

Positions 12 and 14 each coordinate Zn(2+). The substrate site is built by His-14, Asp-16, and Gly-170. His-197 serves as a coordination point for Zn(2+). Glu-200 serves as the catalytic Proton donor. Residue Asp-278 coordinates Zn(2+). Position 279 (Asp-279) interacts with substrate.

Belongs to the metallo-dependent hydrolases superfamily. Adenosine and AMP deaminases family. Adenosine deaminase subfamily. Requires Zn(2+) as cofactor.

The enzyme catalyses adenosine + H2O + H(+) = inosine + NH4(+). The catalysed reaction is 2'-deoxyadenosine + H2O + H(+) = 2'-deoxyinosine + NH4(+). Catalyzes the hydrolytic deamination of adenosine and 2-deoxyadenosine. This Shewanella sp. (strain MR-4) protein is Adenosine deaminase.